Here is a 148-residue protein sequence, read N- to C-terminus: Lipoprotein signal peptidase (148 aa).

2 helical membrane-spanning segments follow: residues 57–77 (QWIFIIVALLATVFGLYYLNT) and 80–100 (VHIFGRLGIILIISGALGNLI). Residues aspartate 110 and aspartate 126 contribute to the active site. Residues 124 to 144 (IADVFVVVGTVFLCIYVLFFE) form a helical membrane-spanning segment.

This sequence belongs to the peptidase A8 family.

It is found in the cell membrane. It catalyses the reaction Release of signal peptides from bacterial membrane prolipoproteins. Hydrolyzes -Xaa-Yaa-Zaa-|-(S,diacylglyceryl)Cys-, in which Xaa is hydrophobic (preferably Leu), and Yaa (Ala or Ser) and Zaa (Gly or Ala) have small, neutral side chains.. The protein operates within protein modification; lipoprotein biosynthesis (signal peptide cleavage). Functionally, this protein specifically catalyzes the removal of signal peptides from prolipoproteins. The chain is Lipoprotein signal peptidase from Clostridioides difficile (strain 630) (Peptoclostridium difficile).